The primary structure comprises 60 residues: Large ribosomal subunit protein bL32 (60 aa).

Residues 1–28 are disordered; it reads MAVQQNKKSRSKRDMRRSHDALTGPTLS. Positions 7–16 are enriched in basic residues; that stretch reads KKSRSKRDMR.

Belongs to the bacterial ribosomal protein bL32 family.

The sequence is that of Large ribosomal subunit protein bL32 from Cellvibrio japonicus (strain Ueda107) (Pseudomonas fluorescens subsp. cellulosa).